The following is a 343-amino-acid chain: Transmembrane protein 120A (343 aa).

The Cytoplasmic segment spans residues 1-132; the sequence is MHPPPPGPLG…KQAKFAYKDE (132 aa). Position 130 (Lys130) interacts with CoA. Residues 133–152 traverse the membrane as a helical segment; sequence YEKFKLYLTIILILISFTCR. Over 153–158 the chain is Extracellular; it reads FLLNSR. Residues 159 to 177 traverse the membrane as a helical segment; the sequence is VTDAAFNFLLVWYYCTLTI. Over 178-190 the chain is Cytoplasmic; sequence RESILINNGSRIK. Residues Ser187 and Arg188 each coordinate CoA. Residues 191–209 form a helical membrane-spanning segment; it reads GWWVFHHYVSTFLSGVMLT. Over 210–218 the chain is Extracellular; the sequence is WPDGLMYQK. A helical membrane pass occupies residues 219 to 240; the sequence is FRNQFLSFSMYQSFVQFLQYYY. Residues Gln237, Tyr240, Gln241, and His283 each contribute to the CoA site. Residues 241–270 lie on the Cytoplasmic side of the membrane; the sequence is QSGCLYRLRALGERHTMDLTVEGFQSWMWR. Residues 271–294 form a helical membrane-spanning segment; that stretch reads GLTFLLPFLFFGHFWQLFNALTLF. Residues 295–304 lie on the Extracellular side of the membrane; that stretch reads NLARDPECKE. A helical membrane pass occupies residues 305–330; the sequence is WQVLMCGFPFLLLFLGNFFTTLRVVH. The Cytoplasmic portion of the chain corresponds to 331–343; it reads QKFHNQLHGSKKE. Residue Lys332 coordinates CoA.

The protein belongs to the TMEM120 family. As to quaternary structure, homodimer. Forms heterooligomer with TMEM120B. Interacts with PKD2; TMEM120A inhibits PKD2 channel activity through the physical association of PKD2 with TMEM120A.

Its subcellular location is the cell membrane. It is found in the nucleus inner membrane. The protein resides in the endoplasmic reticulum. Functionally, multifunctional protein involved in mechanosensation, and plays an essential role in lipid metabolism and adipocyte differentiation. May function as an ion channel involved in sensing mechanical stimuli. Mediates the mechanosensitivity of the PKD2-TMEM120A channel complex through direct physical interaction. TMEM120A seems to affect mechanosensation by inhibiting PIEZO2 channels, possibly by altering cellular lipid content. TMEM120A is structurally similar to a lipid-modifying enzyme, ELOVL7, and contains a bound coenzyme A molecule, which suggests it might function as an enzyme in lipid metabolism. Additionnaly, implicated in innate immune response against Zika virus. Acts as a key activator of the antiviral signaling involving STING1. This Bos taurus (Bovine) protein is Transmembrane protein 120A.